The following is a 268-amino-acid chain: Ribosomal RNA small subunit methyltransferase A (268 aa).

S-adenosyl-L-methionine-binding residues include asparagine 16, leucine 18, glycine 43, glutamate 64, aspartate 89, and asparagine 110.

Belongs to the class I-like SAM-binding methyltransferase superfamily. rRNA adenine N(6)-methyltransferase family. RsmA subfamily.

It is found in the cytoplasm. It carries out the reaction adenosine(1518)/adenosine(1519) in 16S rRNA + 4 S-adenosyl-L-methionine = N(6)-dimethyladenosine(1518)/N(6)-dimethyladenosine(1519) in 16S rRNA + 4 S-adenosyl-L-homocysteine + 4 H(+). Specifically dimethylates two adjacent adenosines (A1518 and A1519) in the loop of a conserved hairpin near the 3'-end of 16S rRNA in the 30S particle. May play a critical role in biogenesis of 30S subunits. This chain is Ribosomal RNA small subunit methyltransferase A, found in Pseudomonas aeruginosa (strain ATCC 15692 / DSM 22644 / CIP 104116 / JCM 14847 / LMG 12228 / 1C / PRS 101 / PAO1).